Consider the following 190-residue polypeptide: MFSAQNKIKKDKNAEPTECEEQVAQALFDLENTNQELKSELKDLYINQAVHMDISGNRKAVVIYVPFRLRKAFRKIHPRLVRELEKKFSGKDVIFVTTRRIMRPPKKGAAVQRPRNRTLTSVHEAMLEDVAFPAEIVGKRTRYRLDGSKIMKVFLDAKEKNNTEYKLETMVGVYRKLTGKDVVFEYPVEA.

N-acetylmethionine is present on M1. Positions 17-50 (TECEEQVAQALFDLENTNQELKSELKDLYINQAV) form a coiled coil.

It belongs to the eukaryotic ribosomal protein eS7 family.

The sequence is that of Small ribosomal subunit protein eS7x (RPS7C) from Arabidopsis thaliana (Mouse-ear cress).